The sequence spans 419 residues: UDP-N-acetylglucosamine 1-carboxyvinyltransferase (419 aa).

Position 22–23 (22–23 (KN)) interacts with phosphoenolpyruvate. UDP-N-acetyl-alpha-D-glucosamine is bound at residue Arg-92. The Proton donor role is filled by Cys-116. Position 116 is a 2-(S-cysteinyl)pyruvic acid O-phosphothioketal (Cys-116). Residues 121 to 125 (RPIDL), Asp-307, and Leu-329 contribute to the UDP-N-acetyl-alpha-D-glucosamine site.

Belongs to the EPSP synthase family. MurA subfamily.

It localises to the cytoplasm. It carries out the reaction phosphoenolpyruvate + UDP-N-acetyl-alpha-D-glucosamine = UDP-N-acetyl-3-O-(1-carboxyvinyl)-alpha-D-glucosamine + phosphate. The protein operates within cell wall biogenesis; peptidoglycan biosynthesis. Cell wall formation. Adds enolpyruvyl to UDP-N-acetylglucosamine. In Campylobacter fetus subsp. fetus (strain 82-40), this protein is UDP-N-acetylglucosamine 1-carboxyvinyltransferase.